We begin with the raw amino-acid sequence, 381 residues long: Tafazzin (381 aa).

At 1 to 25 (MSFRDVLERGDEFLEAYPRRSPLWR) the chain is on the mitochondrial intermembrane side. Residues 26–47 (FLSYSTSLLTFGVSKLLLFTCY) lie within the membrane without spanning it. Residues 48-381 (NVKLNGFEKL…PEGKPKGKDD (334 aa)) lie on the Mitochondrial intermembrane side of the membrane. The short motif at 77–82 (HMSMVD) is the HXXXXD motif element. Residues 215–232 (LEATKPPIVVPIFATGFE) form a required for membrane insertion region.

The protein belongs to the taffazin family.

It localises to the mitochondrion outer membrane. Its subcellular location is the mitochondrion inner membrane. It catalyses the reaction 1'-[1,2-diacyl-sn-glycero-3-phospho],3'-[1-acyl-sn-glycero-3-phospho]-glycerol + a 1,2-diacyl-sn-glycero-3-phosphocholine = a cardiolipin + a 1-acyl-sn-glycero-3-phosphocholine. The enzyme catalyses 1,2-di-(9Z,12Z-octadecadienoyl)-sn-glycero-3-phosphocholine + 1'-[1,2-di-(9Z,12Z-octadecadienoyl)-sn-glycero-3-phospho]-3'-[1-(9Z,12Z-octadecadienoyl)-sn-glycero-3-phospho]-glycerol = 1-(9Z,12Z)-octadecadienoyl-sn-glycero-3-phosphocholine + 1',3'-bis-[1,2-di-(9Z,12Z-octadecadienoyl)-sn-glycero-3-phospho]-glycerol. The catalysed reaction is 1'-[1,2-di-(9Z-octadecenoyl)-sn-glycero-3-phospho]-3'-[1-(9Z-octadecenoyl)-2-hexadecanoyl-sn-glycero-3-phospho]-glycerol + 1-hexadecanoyl-sn-glycero-3-phosphocholine = 1'-[1,2-di-(9Z-octadecenoyl)-sn-glycero-3-phospho]-3'-[1-(9Z-octadecenoyl)-sn-glycero-3-phospho]-glycerol + 1,2-dihexadecanoyl-sn-glycero-3-phosphocholine. It carries out the reaction 1'-[1,2-di-(9Z-octadecenoyl)-sn-glycero-3-phospho]-3'-[1-(9Z-octadecenoyl)-2-(9Z-hexadecenoyl)-sn-glycero-3-phospho]-glycerol + 1-(9Z-hexadecenoyl)-sn-glycero-3-phosphocholine = 1,2-di-(9Z-hexadecenoyl)-sn-glycero-3-phosphocholine + 1'-[1,2-di-(9Z-octadecenoyl)-sn-glycero-3-phospho]-3'-[1-(9Z-octadecenoyl)-sn-glycero-3-phospho]-glycerol. It catalyses the reaction 1',3'-bis[1,2-di-(9Z-octadecenoyl)-sn-glycero-3-phospho]-glycerol + 1-(9Z-octadecenoyl)-sn-glycero-3-phosphocholine = 1'-[1,2-di-(9Z-octadecenoyl)-sn-glycero-3-phospho]-3'-[1-(9Z-octadecenoyl)-sn-glycero-3-phospho]-glycerol + 1,2-di-(9Z-octadecenoyl)-sn-glycero-3-phosphocholine. The enzyme catalyses 1'-[1,2-di-(9Z-octadecenoyl)-sn-glycero-3-phospho]-3'-[1-(9Z-octadecenoyl)-2-(9Z,12Z-octadecadienoyl)-sn-glycero-3-phospho]-glycerol + 1-(9Z,12Z)-octadecadienoyl-sn-glycero-3-phosphocholine = 1,2-di-(9Z,12Z-octadecadienoyl)-sn-glycero-3-phosphocholine + 1'-[1,2-di-(9Z-octadecenoyl)-sn-glycero-3-phospho]-3'-[1-(9Z-octadecenoyl)-sn-glycero-3-phospho]-glycerol. The catalysed reaction is 1'-[1,2-di-(9Z-octadecenoyl)-sn-glycero-3-phospho]-3'-[1-(9Z-octadecenoyl)-2-(9Z-hexadecenoyl)-sn-glycero-3-phospho]-glycerol + 1-hexadecanoyl-sn-glycero-3-phosphocholine = 1-hexadecanoyl-2-(9Z-hexadecenoyl)-sn-glycero-3-phosphocholine + 1'-[1,2-di-(9Z-octadecenoyl)-sn-glycero-3-phospho]-3'-[1-(9Z-octadecenoyl)-sn-glycero-3-phospho]-glycerol. It carries out the reaction 1'-[1,2-di-(9Z-octadecenoyl)-sn-glycero-3-phospho]-3'-[1-(9Z-octadecenoyl)-2-hexadecanoyl-sn-glycero-3-phospho]-glycerol + 1-(9Z-hexadecenoyl)-sn-glycero-3-phosphocholine = 1-(9Z-hexadecenoyl)-2-hexadecanoyl-sn-glycero-3-phosphocholine + 1'-[1,2-di-(9Z-octadecenoyl)-sn-glycero-3-phospho]-3'-[1-(9Z-octadecenoyl)-sn-glycero-3-phospho]-glycerol. It catalyses the reaction 2 1'-[1,2-diacyl-sn-glycero-3-phospho],3'-[1-acyl-sn-glycero-3-phospho]-glycerol = 1',3'-bis-[1-acyl-sn-glycero-3-phospho]-glycerol + a cardiolipin. The enzyme catalyses 2 1'-[1,2-di-(9Z-octadecenoyl)-sn-glycero-3-phospho]-3'-[1-(9Z-octadecenoyl)-sn-glycero-3-phospho]-glycerol = 1',3'-bis-[1-(9Z-octadecenoyl)-sn-glycero-3-phospho]-glycerol + 1',3'-bis[1,2-di-(9Z-octadecenoyl)-sn-glycero-3-phospho]-glycerol. The catalysed reaction is 1,2-di-(9Z-hexadecenoyl)-sn-glycero-3-phosphocholine + 1-hexadecanoyl-sn-glycero-3-phosphocholine = 1-hexadecanoyl-2-(9Z-hexadecenoyl)-sn-glycero-3-phosphocholine + 1-(9Z-hexadecenoyl)-sn-glycero-3-phosphocholine. It carries out the reaction 1'-[1,2-di-(9Z,12Z-octadecadienoyl)-sn-glycero-3-phospho]-3'-[1-(9Z,12Z-octadecadienoyl)-sn-glycero-3-phospho]-glycerol + 1,2-di-(9Z-octadecenoyl)-sn-glycero-3-phosphocholine = 1'-[1,2-di-(9Z,12Z-octadecadienoyl)-sn-glycero-3-phospho]-3'-[1-(9Z,12Z-octadecadienoyl)-2-(9Z-octadecenoyl)-sn-glycero-3-phospho]-glycerol + 1-(9Z-octadecenoyl)-sn-glycero-3-phosphocholine. It functions in the pathway phospholipid metabolism. Its function is as follows. Acyltransferase required to remodel newly synthesized phospholipid cardiolipin (1',3'-bis-[1,2-diacyl-sn-glycero-3-phospho]-glycerol or CL), a key component of the mitochondrial inner membrane, with tissue specific acyl chains necessary for adequate mitochondrial function. Its role in cellular physiology is to improve mitochondrial performance. CL is critical for the coassembly of lipids and proteins in mitochondrial membranes, for instance, remodeling of the acyl groups of CL in the mitochondrial inner membrane affects the assembly and stability of respiratory chain complex IV and its supercomplex forms. Catalyzes the transacylation between phospholipids and lysophospholipids, with the highest rate being between phosphatidylcholine (1,2-diacyl-sn-glycero-3-phosphocholine or PC) and CL. Catalyzes both 1-acyl-sn-glycero-3-phosphocholine (lysophosphatidylcholine or LPC) reacylation and PC-CL transacylation, that means, it exchanges acyl groups between CL and PC by a combination of forward and reverse transacylations. Also catalyzes transacylations between other phospholipids such as phosphatidylethanolamine (1,2-diacyl-sn-glycero-3-phosphoethanolamine or PE) and CL, between PC and PE, and between PC and phosphatidate (1,2-diacyl-sn-glycero-3-phosphate or PA), although at lower rate. Not regiospecific, it transfers acyl groups into any of the sn-1 and sn-2 positions of the monolysocardiolipin (MLCL), which is an important prerequisite for uniformity and symmetry in CL acyl distribution. Cannot transacylate dilysocardiolipin (DLCL), thus, the role of MLCL is limited to that of an acyl acceptor. CoA-independent, it can reshuffle molecular species within a single phospholipid class. Redistributes fatty acids between MLCL, CL, and other lipids, which prolongs the half-life of CL. Its action is completely reversible, which allows for cyclic changes, such as fission and fusion or bending and flattening of the membrane. Hence, by contributing to the flexibility of the lipid composition, it plays an important role in the dynamics of mitochondria membranes. Essential for the final stage of spermatogenesis, spermatid individualization. Required for the initiation of mitophagy. The polypeptide is Tafazzin (TAZ1) (Saccharomyces cerevisiae (strain ATCC 204508 / S288c) (Baker's yeast)).